Reading from the N-terminus, the 143-residue chain is Transcriptional regulator MraZ (143 aa).

SpoVT-AbrB domains lie at 5-47 and 76-119; these read EYFH…PVSA and ASNQ…DKEK.

Belongs to the MraZ family. In terms of assembly, forms oligomers.

It is found in the cytoplasm. The protein localises to the nucleoid. This Finegoldia magna (strain ATCC 29328 / DSM 20472 / WAL 2508) (Peptostreptococcus magnus) protein is Transcriptional regulator MraZ.